Here is a 127-residue protein sequence, read N- to C-terminus: Mini-ribonuclease 3-like protein (127 aa).

Residue D19 is part of the active site.

Belongs to the MrnC RNase family.

Might be a ribonuclease involved in RNA processing. The protein is Mini-ribonuclease 3-like protein (mrnCL) of Ilyobacter polytropus (strain ATCC 51220 / DSM 2926 / LMG 16218 / CuHBu1).